The following is a 492-amino-acid chain: Ketol-acid reductoisomerase (NADP(+)) (492 aa).

One can recognise a KARI N-terminal Rossmann domain in the interval 15 to 208; it reads AQLGKCRFMA…GGDRAGVLES (194 aa). Residues 45–48, R68, R76, S78, and 108–110 contribute to the NADP(+) site; these read CGAQ and DKQ. H132 is a catalytic residue. NADP(+) is bound at residue G158. 2 KARI C-terminal knotted domains span residues 209–344 and 345–485; these read SFVA…KAPP and FEGK…MTDM. The Mg(2+) site is built by D217, E221, E389, and E393. S414 is a binding site for substrate.

It belongs to the ketol-acid reductoisomerase family. Mg(2+) serves as cofactor.

It carries out the reaction (2R)-2,3-dihydroxy-3-methylbutanoate + NADP(+) = (2S)-2-acetolactate + NADPH + H(+). It catalyses the reaction (2R,3R)-2,3-dihydroxy-3-methylpentanoate + NADP(+) = (S)-2-ethyl-2-hydroxy-3-oxobutanoate + NADPH + H(+). It functions in the pathway amino-acid biosynthesis; L-isoleucine biosynthesis; L-isoleucine from 2-oxobutanoate: step 2/4. Its pathway is amino-acid biosynthesis; L-valine biosynthesis; L-valine from pyruvate: step 2/4. Functionally, involved in the biosynthesis of branched-chain amino acids (BCAA). Catalyzes an alkyl-migration followed by a ketol-acid reduction of (S)-2-acetolactate (S2AL) to yield (R)-2,3-dihydroxy-isovalerate. In the isomerase reaction, S2AL is rearranged via a Mg-dependent methyl migration to produce 3-hydroxy-3-methyl-2-ketobutyrate (HMKB). In the reductase reaction, this 2-ketoacid undergoes a metal-dependent reduction by NADPH to yield (R)-2,3-dihydroxy-isovalerate. This chain is Ketol-acid reductoisomerase (NADP(+)), found in Edwardsiella ictaluri (strain 93-146).